The primary structure comprises 294 residues: Acetylglutamate kinase (294 aa).

Substrate contacts are provided by residues 67-68, Arg-89, and Asn-193; that span reads GG.

Belongs to the acetylglutamate kinase family. ArgB subfamily.

Its subcellular location is the cytoplasm. It carries out the reaction N-acetyl-L-glutamate + ATP = N-acetyl-L-glutamyl 5-phosphate + ADP. Its pathway is amino-acid biosynthesis; L-arginine biosynthesis; N(2)-acetyl-L-ornithine from L-glutamate: step 2/4. Its function is as follows. Catalyzes the ATP-dependent phosphorylation of N-acetyl-L-glutamate. In Leptospira interrogans serogroup Icterohaemorrhagiae serovar copenhageni (strain Fiocruz L1-130), this protein is Acetylglutamate kinase.